The chain runs to 253 residues: Sulfoacetaldehyde reductase (253 aa).

An NADP(+)-binding site is contributed by 6–30 (FITGATSGFGRAAAHRFAAAGWSLV). Serine 139 contributes to the substrate binding site. Residue tyrosine 152 is the Proton acceptor of the active site.

Belongs to the short-chain dehydrogenases/reductases (SDR) family. In terms of assembly, homodimer and heterotetramer.

The enzyme catalyses 2-hydroxyethane-1-sulfonate + NADP(+) = sulfoacetaldehyde + NADPH + H(+). Its pathway is organosulfur degradation. In terms of biological role, catalyzes the formation of isethionate from 2-sulfoacetaldehyde in the deaminative pathway of taurine. The enzyme is specific for NADPH; NADH is not a substrate. Responsible for most of the activity observed in taurine-grown cells. This Chromohalobacter salexigens (strain ATCC BAA-138 / DSM 3043 / CIP 106854 / NCIMB 13768 / 1H11) protein is Sulfoacetaldehyde reductase (isfD).